A 2280-amino-acid chain; its full sequence is Genome polyprotein (2280 aa).

The 155-residue stretch at Glu454 to Lys608 folds into the SF3 helicase domain. Gly480 to Thr487 is a binding site for ATP. Tyr965 bears the O-(5'-phospho-RNA)-tyrosine mark. Residues Ala1054–Glu1202 form the Peptidase C24 domain. Catalysis depends on for 3CLpro activity residues His1084, Glu1105, and Cys1169. In terms of domain architecture, RdRp catalytic spans Gly1442–Phe1567. The segment at Gly1722–Pro1746 is disordered. Positions Asn1723 to Pro1735 are enriched in polar residues.

Homodimer. Homomultimer. Post-translationally, specific enzymatic cleavages in vivo yield mature proteins. Pro-Pol is first autocatalytically cleaved, then processes the whole polyprotein. In terms of processing, VPg is uridylylated by the polymerase and is covalently attached to the 5'-end of the polyadenylated genomic and subgenomic RNAs. This uridylylated form acts as a nucleotide-peptide primer for the polymerase.

Its subcellular location is the virion. It is found in the host cytoplasm. It catalyses the reaction a ribonucleoside 5'-triphosphate + H2O = a ribonucleoside 5'-diphosphate + phosphate + H(+). The enzyme catalyses RNA(n) + a ribonucleoside 5'-triphosphate = RNA(n+1) + diphosphate. It carries out the reaction Endopeptidase with a preference for cleavage when the P1 position is occupied by Glu-|-Xaa and the P1' position is occupied by Gly-|-Yaa.. Functionally, together with NTPase and NS4, initiates the formation of the replication complex. Induces the proliferation of the host smooth ER membranes forming long tubular structures. These remodeled membranes probably form the viral factories that contain the replication complex. In terms of biological role, displays NTPase activity, but no helicase activity. Induces the formation of convoluted membranes derived from the host ER. These remodeled membranes probably form the viral factories that contain the replication complex. Together with NS2 and NS4, initiates the formation of the replication complex. Its function is as follows. Probable key protein responsible for the formation of membrane alterations by the virus. Induces the formation of convoluted membranes derived from the host ER. These remodeled membranes probably form the viral factories that contain the replication complex. Together with NS2 and NTPase, initiates the formation of the replication complex. Viral genome-linked protein is covalently linked to the 5'-end of the positive-strand, negative-strand genomic RNAs and subgenomic RNA. Acts as a genome-linked replication primer. May recruit ribosome to viral RNA thereby promoting viral proteins translation. Interacts with host translation initiation complex to allow the translation of viral proteins. Functionally, protease-polymerase p76 processes the polyprotein: Pro-Pol is first released by autocleavage, then all other proteins are cleaved. Cleaves host translation initiation factor eIF4G1, eIF4G2 and PABP1 thereby inducing a shutdown of host protein synthesis. This shutdown may not prevent viral mRNA from being translated since viral Vpg replaces the cap. It is also an RNA-directed RNA polymerase which replicates genomic and antigenomic viral RNA by recognizing specific signals. Also transcribes a subgenomic mRNA by initiating RNA synthesis internally on antigenomic RNA. This sgRNA codes for structural proteins. Catalyzes the covalent attachment VPg with viral RNAs. In terms of biological role, capsid protein self assembles to form an icosahedral capsid with a T=3 symmetry, about 38 nm in diameter, and consisting of 180 capsid proteins. The capsid encapsulate the genomic RNA and VP2 proteins. Attaches virion to target cells, inducing endocytosis of the viral particle. Acidification of the endosome induces conformational change of capsid protein thereby injecting virus genomic RNA into host cytoplasm. This chain is Genome polyprotein, found in Sapporo virus (isolate GI/Human/Germany/pJG-Sap01) (Hu/Dresden/pJG-Sap01/DE).